The chain runs to 60 residues: Protein translocase subunit SecE (60 aa).

Residues 37–57 (LLGFALVGGIGYLIHLGYIIL) traverse the membrane as a helical segment.

The protein belongs to the SecE/SEC61-gamma family. In terms of assembly, component of the Sec protein translocase complex. Heterotrimer consisting of SecY (alpha), SecG (beta) and SecE (gamma) subunits. The heterotrimers can form oligomers, although 1 heterotrimer is thought to be able to translocate proteins. Interacts with the ribosome. May interact with SecDF, and other proteins may be involved.

Its subcellular location is the cell membrane. Functionally, essential subunit of the Sec protein translocation channel SecYEG. Clamps together the 2 halves of SecY. May contact the channel plug during translocation. This is Protein translocase subunit SecE from Aeropyrum pernix (strain ATCC 700893 / DSM 11879 / JCM 9820 / NBRC 100138 / K1).